Here is a 317-residue protein sequence, read N- to C-terminus: Secreted mono- and diacylglycerol lipase 3 (317 aa).

The N-terminal stretch at 1–29 (MMFADDLVRMAVLRFITVALAAITNVANA) is a signal peptide. Cysteine 61 and cysteine 310 are joined by a disulfide. An N-linked (GlcNAc...) asparagine glycan is attached at asparagine 108. Serine 175 acts as the Nucleophile in catalysis. Asparagine 194 carries N-linked (GlcNAc...) asparagine glycosylation. Aspartate 234 is an active-site residue. N-linked (GlcNAc...) asparagine glycosylation is present at asparagine 258. Histidine 294 is an active-site residue.

This sequence belongs to the AB hydrolase superfamily. Lipase family. Class 3 subfamily.

It localises to the secreted. It carries out the reaction a monoacylglycerol + H2O = glycerol + a fatty acid + H(+). The catalysed reaction is a diacylglycerol + H2O = a monoacylglycerol + a fatty acid + H(+). Functionally, secreted mono- and diacylglycerol lipase involved in plant virulence. Has a substrate preference for p-nitrophenyl esters with a carbon chain length of C10 (p-nitrophenyl caprate). This is Secreted mono- and diacylglycerol lipase 3 from Gibberella zeae (strain ATCC MYA-4620 / CBS 123657 / FGSC 9075 / NRRL 31084 / PH-1) (Wheat head blight fungus).